The sequence spans 93 residues: UPF0358 protein OB1428 (93 aa).

The protein belongs to the UPF0358 family.

The polypeptide is UPF0358 protein OB1428 (Oceanobacillus iheyensis (strain DSM 14371 / CIP 107618 / JCM 11309 / KCTC 3954 / HTE831)).